A 507-amino-acid polypeptide reads, in one-letter code: Putative propionyl-CoA carboxylase beta chain (507 aa).

Positions 1–25 (MNEHMDHFYTKRKQAEEGGGREKLA) are enriched in basic and acidic residues. The interval 1–30 (MNEHMDHFYTKRKQAEEGGGREKLAQQRQK) is disordered. The region spanning 1–254 (MNEHMDHFYT…NGRTTEPKPE (254 aa)) is the CoA carboxyltransferase N-terminal domain. The interval 1–501 (MNEHMDHFYT…HKTEERPKKK (501 aa)) is carboxyltransferase. Residues 256 to 501 (EASRPLLNRL…HKTEERPKKK (246 aa)) form the CoA carboxyltransferase C-terminal domain.

The protein belongs to the AccD/PCCB family. Probably a dodecamer composed of six biotin-containing alpha subunits and six beta subunits.

It carries out the reaction propanoyl-CoA + hydrogencarbonate + ATP = (S)-methylmalonyl-CoA + ADP + phosphate + H(+). It functions in the pathway metabolic intermediate metabolism; propanoyl-CoA degradation; succinyl-CoA from propanoyl-CoA: step 1/3. This is Putative propionyl-CoA carboxylase beta chain (yqjD) from Bacillus subtilis (strain 168).